Reading from the N-terminus, the 283-residue chain is Acetylglutamate kinase (283 aa).

Substrate contacts are provided by residues 63–64 (GG), R85, and N178.

Belongs to the acetylglutamate kinase family. ArgB subfamily.

The protein resides in the cytoplasm. It carries out the reaction N-acetyl-L-glutamate + ATP = N-acetyl-L-glutamyl 5-phosphate + ADP. The protein operates within amino-acid biosynthesis; L-arginine biosynthesis; N(2)-acetyl-L-ornithine from L-glutamate: step 2/4. In terms of biological role, catalyzes the ATP-dependent phosphorylation of N-acetyl-L-glutamate. This is Acetylglutamate kinase from Prochlorococcus marinus (strain AS9601).